The sequence spans 130 residues: 3-aminoacrylate deaminase RutC (130 aa).

Belongs to the RutC family.

It carries out the reaction (Z)-3-aminoacrylate + H2O + H(+) = 3-oxopropanoate + NH4(+). Functionally, involved in pyrimidine catabolism. Catalyzes the deamination of 3-aminoacrylate to malonic semialdehyde, a reaction that can also occur spontaneously. RutC may facilitate the reaction and modulate the metabolic fitness, rather than catalyzing essential functions. This chain is 3-aminoacrylate deaminase RutC, found in Haliangium ochraceum (strain DSM 14365 / JCM 11303 / SMP-2).